A 110-amino-acid chain; its full sequence is SOSS complex subunit C (110 aa).

The protein belongs to the SOSS-C family. Belongs to the multiprotein complex Integrator. Component of the SOSS complex, composed of soss-b (soss-b1/nabp2 or soss-b2/nabp1), soss-a/ints3 and soss-c/inip.

It is found in the nucleus. Functionally, component of the SOSS complex, a multiprotein complex that functions downstream of the MRN complex to promote DNA repair and G2/M checkpoint. The SOSS complex associates with single-stranded DNA at DNA lesions and influences diverse endpoints in the cellular DNA damage response including cell-cycle checkpoint activation, recombinational repair and maintenance of genomic stability. Required for efficient homologous recombination-dependent repair of double-strand breaks (DSBs). This is SOSS complex subunit C (inip) from Xenopus laevis (African clawed frog).